An 869-amino-acid chain; its full sequence is Retrovirus-related Pol polyprotein from type-1 retrotransposable element R2 (869 aa).

In terms of domain architecture, Reverse transcriptase spans 199–475 (IFVFYGRVPS…DLWKYLGVVY (277 aa)). Positions 601–869 (LYASISHSCK…FNNVTTVVHW (269 aa)) are nucleic acid-binding endonuclease.

The catalysed reaction is DNA(n) + a 2'-deoxyribonucleoside 5'-triphosphate = DNA(n+1) + diphosphate. The protein is Retrovirus-related Pol polyprotein from type-1 retrotransposable element R2 of Bradysia coprophila (Dark-winged fungus gnat).